A 477-amino-acid chain; its full sequence is Ribulose bisphosphate carboxylase large chain (477 aa).

Positions 1–2 (MS) are excised as a propeptide. Pro-3 carries the post-translational modification N-acetylproline. Lys-14 is modified (N6,N6,N6-trimethyllysine). Residues Asn-123 and Thr-173 each coordinate substrate. Lys-175 acts as the Proton acceptor in catalysis. Substrate is bound at residue Lys-177. Mg(2+)-binding residues include Lys-201, Asp-203, and Glu-204. An N6-carboxylysine modification is found at Lys-201. His-294 (proton acceptor) is an active-site residue. Residues Arg-295, His-327, and Ser-379 each contribute to the substrate site.

Belongs to the RuBisCO large chain family. Type I subfamily. Heterohexadecamer of 8 large chains and 8 small chains; disulfide-linked. The disulfide link is formed within the large subunit homodimers. Mg(2+) serves as cofactor. Post-translationally, the disulfide bond which can form in the large chain dimeric partners within the hexadecamer appears to be associated with oxidative stress and protein turnover.

Its subcellular location is the plastid. The protein resides in the chloroplast. It carries out the reaction 2 (2R)-3-phosphoglycerate + 2 H(+) = D-ribulose 1,5-bisphosphate + CO2 + H2O. The catalysed reaction is D-ribulose 1,5-bisphosphate + O2 = 2-phosphoglycolate + (2R)-3-phosphoglycerate + 2 H(+). RuBisCO catalyzes two reactions: the carboxylation of D-ribulose 1,5-bisphosphate, the primary event in carbon dioxide fixation, as well as the oxidative fragmentation of the pentose substrate in the photorespiration process. Both reactions occur simultaneously and in competition at the same active site. The protein is Ribulose bisphosphate carboxylase large chain of Agrostis stolonifera (Creeping bentgrass).